We begin with the raw amino-acid sequence, 60 residues long: Large ribosomal subunit protein uL30 (60 aa).

Belongs to the universal ribosomal protein uL30 family. Part of the 50S ribosomal subunit.

In Finegoldia magna (strain ATCC 29328 / DSM 20472 / WAL 2508) (Peptostreptococcus magnus), this protein is Large ribosomal subunit protein uL30.